The following is a 95-amino-acid chain: Phosphoribosyl-ATP pyrophosphatase (95 aa).

This sequence belongs to the PRA-PH family.

It localises to the cytoplasm. The enzyme catalyses 1-(5-phospho-beta-D-ribosyl)-ATP + H2O = 1-(5-phospho-beta-D-ribosyl)-5'-AMP + diphosphate + H(+). The protein operates within amino-acid biosynthesis; L-histidine biosynthesis; L-histidine from 5-phospho-alpha-D-ribose 1-diphosphate: step 2/9. The chain is Phosphoribosyl-ATP pyrophosphatase from Sulfolobus acidocaldarius (strain ATCC 33909 / DSM 639 / JCM 8929 / NBRC 15157 / NCIMB 11770).